Consider the following 342-residue polypeptide: Dihydroorotase (342 aa).

The Zn(2+) site is built by His-13 and His-15. Residues 15–17 (HLR) and Asn-41 contribute to the substrate site. Positions 98, 135, and 173 each coordinate Zn(2+). Position 98 is an N6-carboxylysine (Lys-98). A substrate-binding site is contributed by His-135. Position 218 (Leu-218) interacts with substrate. Residue Asp-246 participates in Zn(2+) binding. Residue Asp-246 is part of the active site. Substrate-binding residues include His-250 and Ala-262.

It belongs to the metallo-dependent hydrolases superfamily. DHOase family. Class II DHOase subfamily. As to quaternary structure, homodimer. The cofactor is Zn(2+).

It catalyses the reaction (S)-dihydroorotate + H2O = N-carbamoyl-L-aspartate + H(+). The protein operates within pyrimidine metabolism; UMP biosynthesis via de novo pathway; (S)-dihydroorotate from bicarbonate: step 3/3. Catalyzes the reversible cyclization of carbamoyl aspartate to dihydroorotate. The sequence is that of Dihydroorotase from Aliivibrio salmonicida (strain LFI1238) (Vibrio salmonicida (strain LFI1238)).